A 91-amino-acid chain; its full sequence is DNA-directed RNA polymerase subunit omega (91 aa).

The protein belongs to the RNA polymerase subunit omega family. The RNAP catalytic core consists of 2 alpha, 1 beta, 1 beta' and 1 omega subunit. When a sigma factor is associated with the core the holoenzyme is formed, which can initiate transcription.

The catalysed reaction is RNA(n) + a ribonucleoside 5'-triphosphate = RNA(n+1) + diphosphate. Its function is as follows. Promotes RNA polymerase assembly. Latches the N- and C-terminal regions of the beta' subunit thereby facilitating its interaction with the beta and alpha subunits. The chain is DNA-directed RNA polymerase subunit omega from Nocardia farcinica (strain IFM 10152).